The primary structure comprises 356 residues: Probable D-xylulose reductase A (356 aa).

Residues Cys-45, His-70, and Glu-71 each coordinate Zn(2+). 180–185 lines the NAD(+) pocket; sequence GAGPVG.

The protein belongs to the zinc-containing alcohol dehydrogenase family. It depends on Zn(2+) as a cofactor.

The catalysed reaction is xylitol + NAD(+) = D-xylulose + NADH + H(+). It participates in carbohydrate degradation; L-arabinose degradation via L-arabinitol; D-xylulose 5-phosphate from L-arabinose (fungal route): step 4/5. Its function is as follows. Xylitol dehydrogenase which catalyzes the conversion of xylitol to D-xylulose. Xylose is a major component of hemicelluloses such as xylan. Most fungi utilize D-xylose via three enzymatic reactions, xylose reductase (XR), xylitol dehydrogenase (XDH), and xylulokinase, to form xylulose 5-phosphate, which enters pentose phosphate pathway. This Arthroderma otae (strain ATCC MYA-4605 / CBS 113480) (Microsporum canis) protein is Probable D-xylulose reductase A (xdhA).